Reading from the N-terminus, the 178-residue chain is ATP-dependent protease subunit HslV (178 aa).

Thr-7 is an active-site residue. Residues Gly-162, Cys-165, and Thr-168 each contribute to the Na(+) site.

The protein belongs to the peptidase T1B family. HslV subfamily. In terms of assembly, a double ring-shaped homohexamer of HslV is capped on each side by a ring-shaped HslU homohexamer. The assembly of the HslU/HslV complex is dependent on binding of ATP.

The protein localises to the cytoplasm. The enzyme catalyses ATP-dependent cleavage of peptide bonds with broad specificity.. Its activity is regulated as follows. Allosterically activated by HslU binding. Functionally, protease subunit of a proteasome-like degradation complex believed to be a general protein degrading machinery. This chain is ATP-dependent protease subunit HslV, found in Leptothrix cholodnii (strain ATCC 51168 / LMG 8142 / SP-6) (Leptothrix discophora (strain SP-6)).